The sequence spans 632 residues: MAHETMSFQAEVKQLLHLMIHSLYSNKEIFLRELVSNASDAADKLRFEGLADNALYENDPNLRIRIGFDKAARTITIDDNGIGMSRDEAIANLGTIARSGTKEFFTKLSGDQQKDAALIGQFGVGFYSGFIVADKITVETRRAGLPANEAVRWESAGEGDFTIDAIERAQRGTTITLHLREGEDELLSSHRLKSIIQKYSDHIALPILMQKEEWDQEKGEMVLKDEDETVNQASALWTRSKSDITDEQYTQFYQHVAHDHQDPLTWTHNRVEGRSEYTQLLFVPAHAPFDLWNRDYRGGLKLYVKRVFIMDDAEQLLPQYLRFVKGVVDSADLPLNVSREILQESRDVKAIREGVTKRALSMLEELANAEEEAGKEKYKTFWSAFGQVLKEGLGEDHANRERIAKLLRFASTHGDTDAQDVSLADYVSRMKPEQSKIYYVTADTWQAAKNSPHLEVFRKKGVEVLLLTDRVDEWMLSFLHEFDGKPLASVARGDLDLGELNDEEKKAQEQAGEAIKPVVEKMKEALGDKVKEVRVTFRLTDSPSCLVADDNDMSGYLQRMLKAAGQNAPAMQPILEINPEHALVKQLNADSASFGDWCHLLFDQALLAEGGMLDDPASFVKRTNALLLSRAA.

The tract at residues 1–339 (MAHETMSFQA…SADLPLNVSR (339 aa)) is a; substrate-binding. The tract at residues 340–559 (EILQESRDVK…DNDMSGYLQR (220 aa)) is b. Residues 560–632 (MLKAAGQNAP…TNALLLSRAA (73 aa)) form a c region.

This sequence belongs to the heat shock protein 90 family. In terms of assembly, homodimer.

The protein resides in the cytoplasm. In terms of biological role, molecular chaperone. Has ATPase activity. The chain is Chaperone protein HtpG from Burkholderia ambifaria (strain ATCC BAA-244 / DSM 16087 / CCUG 44356 / LMG 19182 / AMMD) (Burkholderia cepacia (strain AMMD)).